We begin with the raw amino-acid sequence, 519 residues long: Serine/threonine-protein kinase RIO3 (519 aa).

Phosphoserine occurs at positions 8 and 112. Phosphotyrosine is present on Tyr122. The segment at 122–159 is disordered; the sequence is YEDSDSSEDEVDWQDTRDDPYRPAKPIPTPKKGFIGKG. A compositionally biased stretch (acidic residues) spans 124-134; sequence DSDSSEDEVDW. Ser125, Ser127, and Ser128 each carry phosphoserine. The 269-residue stretch at 251-519 folds into the Protein kinase domain; the sequence is ETITGCISTG…DGGPPILYDE (269 aa). ATP-binding positions include 257 to 265 and Lys290; that span reads ISTGKESVV. Asp406 acts as the Proton acceptor in catalysis.

It belongs to the protein kinase superfamily. RIO-type Ser/Thr kinase family. As to quaternary structure, interacts with CASP10. Interacts with IRF3; RIOK3 probably mediates the interaction of TBK1 with IRF3. Associated with 40S pre-ribosomal particles. Mg(2+) is required as a cofactor. Post-translationally, autophosphorylated (in vitro).

It localises to the cytoplasm. The catalysed reaction is L-seryl-[protein] + ATP = O-phospho-L-seryl-[protein] + ADP + H(+). It catalyses the reaction L-threonyl-[protein] + ATP = O-phospho-L-threonyl-[protein] + ADP + H(+). Its function is as follows. Involved in regulation of type I interferon (IFN)-dependent immune response which plays a critical role in the innate immune response against DNA and RNA viruses. May act as an adapter protein essential for the recruitment of TBK1 to IRF3. Phosphorylates IFIH1 within the C-terminal region interfering with IFIH1 filament assembly on long dsRNA and resulting in attenuated IFIH1-signaling. Can inhibit CASP10 isoform 7-mediated activation of the NF-kappaB signaling pathway. May play a role in the biogenesis of the 40S ribosomal subunit. Involved in the processing of 21S pre-rRNA to the mature 18S rRNA. The sequence is that of Serine/threonine-protein kinase RIO3 (RIOK3) from Bos taurus (Bovine).